We begin with the raw amino-acid sequence, 195 residues long: HTH-type transcriptional regulator BetI (195 aa).

Residues 8–68 enclose the HTH tetR-type domain; it reads SIRRRQLIDA…ATMRDITSQL (61 aa). The H-T-H motif DNA-binding region spans 31 to 50; sequence TIAQIARRAGVSTGIISHYF.

The protein operates within amine and polyamine biosynthesis; betaine biosynthesis via choline pathway [regulation]. In terms of biological role, repressor involved in the biosynthesis of the osmoprotectant glycine betaine. It represses transcription of the choline transporter BetT and the genes of BetAB involved in the synthesis of glycine betaine. The sequence is that of HTH-type transcriptional regulator BetI from Shigella flexneri serotype 5b (strain 8401).